We begin with the raw amino-acid sequence, 23 residues long: Septenin 2b (23 aa).

In terms of tissue distribution, expressed in skin glands.

It is found in the secreted. In terms of biological role, may act as an antimicrobial peptide. In Osteopilus septentrionalis (Cuban treefrog), this protein is Septenin 2b.